Reading from the N-terminus, the 392-residue chain is Flagellar P-ring protein (392 aa).

The signal sequence occupies residues M1–G38.

This sequence belongs to the FlgI family. As to quaternary structure, the basal body constitutes a major portion of the flagellar organelle and consists of four rings (L,P,S, and M) mounted on a central rod.

It is found in the periplasm. Its subcellular location is the bacterial flagellum basal body. Assembles around the rod to form the L-ring and probably protects the motor/basal body from shearing forces during rotation. The polypeptide is Flagellar P-ring protein (Paramagnetospirillum magneticum (strain ATCC 700264 / AMB-1) (Magnetospirillum magneticum)).